The primary structure comprises 571 residues: Glutamate--tRNA ligase (571 aa).

The 'HIGH' region signature appears at 38-48 (PSPTGFMHIGG). Positions 316–320 (KLSKR) match the 'KMSKS' region motif. Position 319 (lysine 319) interacts with ATP.

It belongs to the class-I aminoacyl-tRNA synthetase family. Glutamate--tRNA ligase type 1 subfamily. As to quaternary structure, monomer.

Its subcellular location is the cytoplasm. The enzyme catalyses tRNA(Glu) + L-glutamate + ATP = L-glutamyl-tRNA(Glu) + AMP + diphosphate. In terms of biological role, catalyzes the attachment of glutamate to tRNA(Glu) in a two-step reaction: glutamate is first activated by ATP to form Glu-AMP and then transferred to the acceptor end of tRNA(Glu). The sequence is that of Glutamate--tRNA ligase from Sorangium cellulosum (strain So ce56) (Polyangium cellulosum (strain So ce56)).